The primary structure comprises 330 residues: Small ribosomal subunit protein mS35 (330 aa).

The segment at 50–73 (AAGKGVRGQMKPRRQAGEPRTERM) is disordered. Residues 64–73 (QAGEPRTERM) show a composition bias toward basic and acidic residues.

This sequence belongs to the mitochondrion-specific ribosomal protein mS35 family. Component of the mitochondrial ribosome small subunit (28S) which comprises a 12S rRNA and about 30 distinct proteins.

It localises to the mitochondrion. This Danio rerio (Zebrafish) protein is Small ribosomal subunit protein mS35 (mrps35).